Here is a 357-residue protein sequence, read N- to C-terminus: Cobalt-precorrin-5B C(1)-methyltransferase (357 aa).

The protein belongs to the CbiD family.

The enzyme catalyses Co-precorrin-5B + S-adenosyl-L-methionine = Co-precorrin-6A + S-adenosyl-L-homocysteine. It functions in the pathway cofactor biosynthesis; adenosylcobalamin biosynthesis; cob(II)yrinate a,c-diamide from sirohydrochlorin (anaerobic route): step 6/10. Functionally, catalyzes the methylation of C-1 in cobalt-precorrin-5B to form cobalt-precorrin-6A. This Alkaliphilus oremlandii (strain OhILAs) (Clostridium oremlandii (strain OhILAs)) protein is Cobalt-precorrin-5B C(1)-methyltransferase.